A 388-amino-acid chain; its full sequence is Phosphoglycerate kinase (388 aa).

Residues 21–23 (DLN), R36, 59–62 (HLGR), R114, and R147 contribute to the substrate site. Residues K198, E315, and 341 to 344 (GGDT) each bind ATP.

This sequence belongs to the phosphoglycerate kinase family. As to quaternary structure, monomer.

The protein resides in the cytoplasm. It carries out the reaction (2R)-3-phosphoglycerate + ATP = (2R)-3-phospho-glyceroyl phosphate + ADP. It functions in the pathway carbohydrate degradation; glycolysis; pyruvate from D-glyceraldehyde 3-phosphate: step 2/5. This is Phosphoglycerate kinase from Buchnera aphidicola subsp. Schizaphis graminum (strain Sg).